Consider the following 309-residue polypeptide: Taste receptor type 2 member 31 (309 aa).

Residues 1–2 (MI) lie on the Extracellular side of the membrane. The helical transmembrane segment at 3–23 (TFLPIIFSILVVVTFVIGNFA) threads the bilayer. At 24–55 (NGFIALVNSTEWVKRQKISFADQILTALAVSR) the chain is on the cytoplasmic side. The helical transmembrane segment at 56–76 (VGLLWVLLLNWYATVLNPAFY) threads the bilayer. The Extracellular segment spans residues 77 to 100 (SVEVRTTTYNVWAVTNHFSNWLAT). The helical transmembrane segment at 101–121 (SLSIFYLLKIANFSNLIFLHL) threads the bilayer. Residues 122–126 (KRRVK) are Cytoplasmic-facing. Residues 127–147 (NVILVMLLGPLLILACHLFMV) traverse the membrane as a helical segment. At 148–181 (NMNEIVRTKEYEENMTWKYILRNAIYHPGMTVTT) the chain is on the extracellular side. A glycan (N-linked (GlcNAc...) asparagine) is linked at asparagine 161. The helical transmembrane segment at 182 to 202 (LQNLVPFTLTLISFLLLICSL) threads the bilayer. The Cytoplasmic segment spans residues 203–229 (CKHLKKMQLHGKGPQDPSTKVHIKALQ). The chain crosses the membrane as a helical span at residues 230–250 (IVISFLLLCVIYFVSVIISIW). The Extracellular portion of the chain corresponds to 251 to 259 (SFESLGNKP). A helical membrane pass occupies residues 260–280 (VFMFCQAIRFSYPSAHPFIVI). Topologically, residues 281 to 309 (WGNKKLKQTFLSVLWNVRYWVKGQKPSSL) are cytoplasmic.

Belongs to the G-protein coupled receptor T2R family.

It localises to the membrane. Its function is as follows. Receptor that may play a role in the perception of bitterness and is gustducin-linked. May play a role in sensing the chemical composition of the gastrointestinal content. The activity of this receptor may stimulate alpha gustducin, mediate PLC-beta-2 activation and lead to the gating of TRPM5. The protein is Taste receptor type 2 member 31 (TAS2R31) of Papio hamadryas (Hamadryas baboon).